Reading from the N-terminus, the 580-residue chain is PTS system fructose-specific EIIB'BC component (580 aa).

PTS EIIB type-2 domains lie at 3–100 (MKIA…QAAE) and 124–221 (KKIV…NAFA). Catalysis depends on phosphocysteine intermediate; for EIIB activity residues C11 and C132. C11 and C132 each carry phosphocysteine; by EIIA. Residues 244–579 (VYKHLMTGVS…KKSAQAKAVA (336 aa)) form the PTS EIIC type-2 domain. Transmembrane regions (helical) follow at residues 254 to 274 (HMLP…VFGI), 292 to 312 (GGSA…FSIA), 322 to 342 (IGGM…VAGF), 367 to 387 (ILII…YVVG), 408 to 428 (NAIL…GGPV), 448 to 468 (MAAI…ATFI), 480 to 500 (AGKA…IPFA), 507 to 527 (VIPA…LFGA), and 537 to 557 (FVLL…AIAV).

Its subcellular location is the cell inner membrane. It carries out the reaction D-fructose(out) + N(pros)-phospho-L-histidyl-[protein] = D-fructose 1-phosphate(in) + L-histidyl-[protein]. In terms of biological role, the phosphoenolpyruvate-dependent sugar phosphotransferase system (sugar PTS), a major carbohydrate active transport system, catalyzes the phosphorylation of incoming sugar substrates concomitantly with their translocation across the cell membrane. The enzyme II FruAB PTS system is involved in fructose transport. In Vibrio cholerae serotype O1 (strain ATCC 39315 / El Tor Inaba N16961), this protein is PTS system fructose-specific EIIB'BC component.